Reading from the N-terminus, the 38-residue chain is Bacteriocin BAC79 (38 aa).

The antimicrobial activity of BAC79 was completely lost after treatment with enzymes trypsin, pepsin, proteinase-K, and carboxypeptidase, while there was no loss of activity with either amylase or lipase. In terms of biological role, has antibacterial activity against a wide spectrum of Gram-positive and Gram-negative bacteria, including L.monocytogenes which is inhibited through disruption of the cell membrane. This chain is Bacteriocin BAC79, found in Weissella confusa (Lactobacillus confusus).